The primary structure comprises 284 residues: L-ribulose-5-phosphate 3-epimerase UlaE (284 aa).

It belongs to the L-ribulose-5-phosphate 3-epimerase family.

It carries out the reaction L-ribulose 5-phosphate = L-xylulose 5-phosphate. It functions in the pathway cofactor degradation; L-ascorbate degradation; D-xylulose 5-phosphate from L-ascorbate: step 3/4. Its function is as follows. Catalyzes the isomerization of L-xylulose-5-phosphate to L-ribulose-5-phosphate. Is involved in the anaerobic L-ascorbate utilization. The sequence is that of L-ribulose-5-phosphate 3-epimerase UlaE from Escherichia coli O127:H6 (strain E2348/69 / EPEC).